A 1040-amino-acid chain; its full sequence is Multidrug resistance protein MdtB (1040 aa).

12 helical membrane passes run 25–45, 347–367, 369–389, 396–416, 440–460, 472–492, 537–557, 863–883, 888–908, 910–930, 968–988, and 998–1018; these read LLMA…PVAA, LMLA…NIPA, IIPG…MVFL, LTLM…IVVI, IGFT…PLLF, FAVT…TLTP, WLTL…WIVI, LGST…VLGV, FIHP…ALLA, IIAG…LIGI, ILMT…STGV, and IAMV…TPVI.

It belongs to the resistance-nodulation-cell division (RND) (TC 2.A.6) family. MdtB subfamily. Part of a tripartite efflux system composed of MdtA, MdtB and MdtC. MdtB forms a heteromultimer with MdtC.

It localises to the cell inner membrane. The polypeptide is Multidrug resistance protein MdtB (Salmonella paratyphi B (strain ATCC BAA-1250 / SPB7)).